A 181-amino-acid polypeptide reads, in one-letter code: Cyclic AMP-dependent transcription factor ATF-3 (181 aa).

A Glycyl lysine isopeptide (Lys-Gly) (interchain with G-Cter in SUMO2) cross-link involves residue Lys78. Residues 86–149 (DERKKRRRER…QHLIYMLNLH (64 aa)) form the bZIP domain. The basic motif stretch occupies residues 88-110 (RKKRRRERNKIAAAKCRNKKKEK). The interval 114-142 (LQKESEKLESVNAELKAQIEELKNEKQHL) is leucine-zipper. Thr162 is subject to Phosphothreonine. Residue Lys175 forms a Glycyl lysine isopeptide (Lys-Gly) (interchain with G-Cter in SUMO2) linkage.

This sequence belongs to the bZIP family. ATF subfamily. In terms of assembly, binds DNA as a homodimer or a heterodimer. Interacts with KAT5; promoting KAT5 autoacetylation and KAT5 deubiquitination by USP7.

Its subcellular location is the nucleus. This protein binds the cAMP response element (CRE) (consensus: 5'-GTGACGT[AC][AG]-3'), a sequence present in many viral and cellular promoters. Represses transcription from promoters with ATF sites. It may repress transcription by stabilizing the binding of inhibitory cofactors at the promoter. Functionally, activates transcription presumably by sequestering inhibitory cofactors away from the promoters. Its function is as follows. Stress-induced isoform, counteracts the transcriptional repression of isoform 1. The sequence is that of Cyclic AMP-dependent transcription factor ATF-3 from Homo sapiens (Human).